The following is a 637-amino-acid chain: Putative pentatricopeptide repeat-containing protein At5g65820 (637 aa).

12 PPR repeats span residues 146–180 (SIEV…NPQL), 182–216 (EPEL…GFEP), 217–247 (DEYV…MRMR), 251–285 (NLRY…GFEP), 286–320 (DIVD…GFEP), 321–355 (NANC…ECEA), 356–390 (DVVT…GLMP), 391–425 (SELT…EYHP), 426–460 (DIGI…GLSP), 461–495 (GVDT…GLFS), 498–532 (QYGT…GACE), and 534–568 (NVLS…DFMP). The segment covering 616 to 630 (QDLTEKAKSKQDREG) has biased composition (basic and acidic residues). Residues 616–637 (QDLTEKAKSKQDREGKKKQRSR) form a disordered region.

This sequence belongs to the PPR family. P subfamily.

The polypeptide is Putative pentatricopeptide repeat-containing protein At5g65820 (Arabidopsis thaliana (Mouse-ear cress)).